Consider the following 294-residue polypeptide: UPF0761 membrane protein YPTB0027 (294 aa).

7 helical membrane passes run 44–64 (LLSL…FPMF), 67–87 (ISIK…GDII), 108–128 (GLIV…NIIW), 136–156 (LVFS…LVGA), 185–205 (VFPL…VPTV), 212–232 (ALIG…GFAM), and 246–266 (VLAV…IVLL).

It belongs to the UPF0761 family.

The protein localises to the cell inner membrane. The sequence is that of UPF0761 membrane protein YPTB0027 from Yersinia pseudotuberculosis serotype I (strain IP32953).